A 228-amino-acid chain; its full sequence is Phosphatidate cytidylyltransferase (228 aa).

6 consecutive transmembrane segments (helical) span residues 31–51 (FVVA…LVGL), 65–85 (IHYL…LIFL), 93–113 (LVIM…MIGG), 131–151 (WTGL…VSLI), 165–185 (IYLF…DLFI), and 206–226 (GVLD…GINI).

It belongs to the CDS family.

The protein localises to the cell membrane. It catalyses the reaction a 1,2-diacyl-sn-glycero-3-phosphate + CTP + H(+) = a CDP-1,2-diacyl-sn-glycerol + diphosphate. It functions in the pathway phospholipid metabolism; CDP-diacylglycerol biosynthesis; CDP-diacylglycerol from sn-glycerol 3-phosphate: step 3/3. This is Phosphatidate cytidylyltransferase (cdsA) from Rickettsia typhi (strain ATCC VR-144 / Wilmington).